The chain runs to 235 residues: UPF0502 protein Bmul_3231/BMULJ_05293 (235 aa).

The protein belongs to the UPF0502 family.

This Burkholderia multivorans (strain ATCC 17616 / 249) protein is UPF0502 protein Bmul_3231/BMULJ_05293.